A 260-amino-acid chain; its full sequence is 3-methyl-2-oxobutanoate hydroxymethyltransferase (260 aa).

Positions 44 and 83 each coordinate Mg(2+). Residues 44–45, Asp-83, and Lys-113 contribute to the 3-methyl-2-oxobutanoate site; that span reads DS. Glu-115 contacts Mg(2+). Catalysis depends on Glu-182, which acts as the Proton acceptor.

This sequence belongs to the PanB family. As to quaternary structure, homodecamer; pentamer of dimers. Mg(2+) is required as a cofactor.

The protein resides in the cytoplasm. It catalyses the reaction 3-methyl-2-oxobutanoate + (6R)-5,10-methylene-5,6,7,8-tetrahydrofolate + H2O = 2-dehydropantoate + (6S)-5,6,7,8-tetrahydrofolate. The protein operates within cofactor biosynthesis; (R)-pantothenate biosynthesis; (R)-pantoate from 3-methyl-2-oxobutanoate: step 1/2. In terms of biological role, catalyzes the reversible reaction in which hydroxymethyl group from 5,10-methylenetetrahydrofolate is transferred onto alpha-ketoisovalerate to form ketopantoate. The chain is 3-methyl-2-oxobutanoate hydroxymethyltransferase from Synechocystis sp. (strain ATCC 27184 / PCC 6803 / Kazusa).